A 552-amino-acid chain; its full sequence is Putative transport protein YPN_3727 (552 aa).

6 consecutive transmembrane segments (helical) span residues 1-21 (MSAI…GLWI), 26-46 (IYGV…VGHF), 65-85 (FGLI…FFSS), 96-116 (FAIL…KLFA), 119-139 (LPII…LGAA), and 158-178 (MGYA…MWLI). RCK C-terminal domains are found at residues 192–276 (AFDS…VVGE) and 279–361 (DVTL…IVGN). 6 consecutive transmembrane segments (helical) span residues 371–391 (MLPV…PLFV), 393–413 (GFPA…ALIL), 439–459 (IVLF…NTLV), 464–484 (LAWI…VGIL), 493–513 (YLTL…LAFA), and 530–550 (VYPL…VLFW).

It belongs to the AAE transporter (TC 2.A.81) family. YidE subfamily.

The protein localises to the cell membrane. This is Putative transport protein YPN_3727 from Yersinia pestis bv. Antiqua (strain Nepal516).